Consider the following 416-residue polypeptide: Nonsense-mediated decay protein 4 (416 aa).

Disordered regions lie at residues 1–21 (MSLY…NYHD), 195–218 (QHPI…YNNS), and 356–393 (DRPS…ANGD). Over residues 12 to 21 (EARKNSNYHD) the composition is skewed to basic and acidic residues. A compositionally biased stretch (basic residues) spans 360–375 (KSKNKNKNKNTKKSTK).

The protein resides in the cytoplasm. Functionally, involved in nonsense-mediated decay of mRNAs containing premature stop codons. The polypeptide is Nonsense-mediated decay protein 4 (NMD4) (Debaryomyces hansenii (strain ATCC 36239 / CBS 767 / BCRC 21394 / JCM 1990 / NBRC 0083 / IGC 2968) (Yeast)).